Here is a 180-residue protein sequence, read N- to C-terminus: UPF0340 protein BLi03936/BL03990 (180 aa).

This sequence belongs to the UPF0340 family.

The sequence is that of UPF0340 protein BLi03936/BL03990 from Bacillus licheniformis (strain ATCC 14580 / DSM 13 / JCM 2505 / CCUG 7422 / NBRC 12200 / NCIMB 9375 / NCTC 10341 / NRRL NRS-1264 / Gibson 46).